The following is a 770-amino-acid chain: Capsid protein (770 aa).

2 disordered regions span residues 645-682 and 697-717; these read QRMQQQPTTTDIFSAGRKRPRRDTEVYHSSQEGEQKES and WEDSQQEESGSQSSEEETQTV. Positions 646 to 656 are enriched in polar residues; that stretch reads RMQQQPTTTDI. A compositionally biased stretch (basic and acidic residues) spans 666–681; that stretch reads RDTEVYHSSQEGEQKE. The segment covering 703 to 717 has biased composition (low complexity); the sequence is EESGSQSSEEETQTV.

The protein belongs to the anelloviridae capsid protein family.

The protein localises to the virion. Functionally, self-assembles to form an icosahedral capsid with a T=1 symmetry, about 30 nm in diameter, and consisting of 60 capsid proteins. The capsid encapsulates the genomic DNA. Capsid protein is involved in attachment and entry into the host cell. The polypeptide is Capsid protein (Homo sapiens (Human)).